Here is a 315-residue protein sequence, read N- to C-terminus: Heme oxygenase 2 (315 aa).

Residues 1 to 15 show a composition bias toward polar residues; sequence MSSEVETSEGVDESE. The interval 1-29 is disordered; sequence MSSEVETSEGVDESENNSTAPEKENHTKM. The residue at position 2 (S2) is an N-acetylserine. Residue S2 is modified to Phosphoserine. The Cytoplasmic portion of the chain corresponds to 2–294; that stretch reads SSEVETSEGV…TAMAVLRKPS (293 aa). Residues H44, Y153, K198, and R202 each coordinate heme b. HRM repeat units follow at residues 263-268 and 280-285; these read KCPFYA and NCPFRT. Residues C264 and C281 each carry the S-nitrosocysteine modification. A helical; Anchor for type IV membrane protein transmembrane segment spans residues 295-315; that stretch reads LQLILAASVALVAGLLAWYYM.

Belongs to the heme oxygenase family. A soluble form arises by proteolytic removal of the membrane anchor. Post-translationally, S-nitrosylated by BLVRB. As to expression, widely distributed in body with a high concentration in the brain.

The protein resides in the microsome membrane. The protein localises to the endoplasmic reticulum membrane. The enzyme catalyses heme b + 3 reduced [NADPH--hemoprotein reductase] + 3 O2 = biliverdin IXalpha + CO + Fe(2+) + 3 oxidized [NADPH--hemoprotein reductase] + 3 H2O + H(+). With respect to regulation, inhibited by metalloporphyrins such as Sn- and Zn-protoporphyrins. Functionally, catalyzes the oxidative cleavage of heme at the alpha-methene bridge carbon, released as carbon monoxide (CO), to generate biliverdin IXalpha, while releasing the central heme iron chelate as ferrous iron. In Rattus norvegicus (Rat), this protein is Heme oxygenase 2 (Hmox2).